Reading from the N-terminus, the 406-residue chain is 2,3-bisphosphoglycerate-independent phosphoglycerate mutase (406 aa).

Belongs to the BPG-independent phosphoglycerate mutase family. A-PGAM subfamily.

The catalysed reaction is (2R)-2-phosphoglycerate = (2R)-3-phosphoglycerate. It functions in the pathway carbohydrate degradation; glycolysis; pyruvate from D-glyceraldehyde 3-phosphate: step 3/5. In terms of biological role, catalyzes the interconversion of 2-phosphoglycerate and 3-phosphoglycerate. In Methanococcus maripaludis (strain C5 / ATCC BAA-1333), this protein is 2,3-bisphosphoglycerate-independent phosphoglycerate mutase.